A 247-amino-acid polypeptide reads, in one-letter code: E3 ubiquitin-protein ligase RNF182 (247 aa).

An RING-type zinc finger spans residues 20–68; sequence CKICYNRYNLKQRKPKVLECCHRVCAKCLYKIIDFGDSPQGVIVCPFCR. 2 helical membrane-spanning segments follow: residues 184–204 and 211–231; these read VLVW…IYLL and LGVV…VYGF.

In terms of assembly, interacts with ATP6V0C.

The protein resides in the membrane. Its subcellular location is the cytoplasm. The catalysed reaction is S-ubiquitinyl-[E2 ubiquitin-conjugating enzyme]-L-cysteine + [acceptor protein]-L-lysine = [E2 ubiquitin-conjugating enzyme]-L-cysteine + N(6)-ubiquitinyl-[acceptor protein]-L-lysine.. It participates in protein modification; protein ubiquitination. In terms of biological role, E3 ubiquitin-protein ligase that mediates the ubiquitination of ATP6V0C and targets it to degradation via the ubiquitin-proteasome pathway. Also plays a role in the inhibition of TLR-triggered innate immune response by mediating 'Lys'-48-linked ubiquitination and subsequent degradation of NF-kappa-B component RELA. This Ailuropoda melanoleuca (Giant panda) protein is E3 ubiquitin-protein ligase RNF182 (RNF182).